Here is a 90-residue protein sequence, read N- to C-terminus: Small ribosomal subunit protein bS18 (90 aa).

The span at 1–14 shows a compositional bias: basic and acidic residues; the sequence is MARDNGNKDRDGKR. A disordered region spans residues 1-23; that stretch reads MARDNGNKDRDGKRPNGGRNRKM.

The protein belongs to the bacterial ribosomal protein bS18 family. Part of the 30S ribosomal subunit. Forms a tight heterodimer with protein bS6.

Binds as a heterodimer with protein bS6 to the central domain of the 16S rRNA, where it helps stabilize the platform of the 30S subunit. The protein is Small ribosomal subunit protein bS18 of Clostridium acetobutylicum (strain ATCC 824 / DSM 792 / JCM 1419 / IAM 19013 / LMG 5710 / NBRC 13948 / NRRL B-527 / VKM B-1787 / 2291 / W).